Consider the following 122-residue polypeptide: Protein preY, mitochondrial (122 aa).

The transit peptide at 1 to 40 (MLAVRAWGRTYNTLVQRKLNAACPTGALPAVTLRPLHCSL) directs the protein to the mitochondrion. The 47-residue stretch at 56–102 (DPTLLQFLVCPLSRKSLRYEESTNELINDELGIAYPIVDGIPNMIPQ) folds into the TRM112 domain.

The protein belongs to the PREY family.

It is found in the mitochondrion. Functionally, in mitochondria, S-adenosylmethionine-dependent methyltransferase chaperone that supports both coenzyme Q biosynthesis and NADH:ubiquinone oxidoreductase complex (complex I, MT-ND1) assembly. This Xenopus tropicalis (Western clawed frog) protein is Protein preY, mitochondrial (pyurf).